The primary structure comprises 672 residues: PHD finger protein MALE STERILITY 1 (672 aa).

The segment at 614–664 adopts a PHD-type zinc-finger fold; it reads RIECECGATEEDGERMVCCDICEVWQHTRCVGVQHNEEVPRIFLCQSCDQH.

In closed flower buds, especially in anthers.

Its subcellular location is the nucleus. Its function is as follows. Transcriptional activator required for anther and post-meiotic pollen development and maturation. Seems to regulate inflorescence branching and floral development. May control tapetal development by directly regulating tapetal programmed cell death (PCD) and breakdown. Implicated in pollen cytosolic components and wall development (e.g. exine and intine formation). The chain is PHD finger protein MALE STERILITY 1 (MS1) from Arabidopsis thaliana (Mouse-ear cress).